The chain runs to 448 residues: Tubulin beta chain (448 aa).

Glutamine 11, glutamate 69, serine 138, glycine 142, threonine 143, glycine 144, asparagine 204, and asparagine 226 together coordinate GTP. Glutamate 69 serves as a coordination point for Mg(2+). Residues 425–448 (YQDASISEGEEEYLEEEEPLEHEE) are disordered. Positions 432-448 (EGEEEYLEEEEPLEHEE) are enriched in acidic residues.

Belongs to the tubulin family. As to quaternary structure, dimer of alpha and beta chains. A typical microtubule is a hollow water-filled tube with an outer diameter of 25 nm and an inner diameter of 15 nM. Alpha-beta heterodimers associate head-to-tail to form protofilaments running lengthwise along the microtubule wall with the beta-tubulin subunit facing the microtubule plus end conferring a structural polarity. Microtubules usually have 13 protofilaments but different protofilament numbers can be found in some organisms and specialized cells. Mg(2+) is required as a cofactor.

The protein resides in the cytoplasm. It is found in the cytoskeleton. In terms of biological role, tubulin is the major constituent of microtubules, a cylinder consisting of laterally associated linear protofilaments composed of alpha- and beta-tubulin heterodimers. Microtubules grow by the addition of GTP-tubulin dimers to the microtubule end, where a stabilizing cap forms. Below the cap, tubulin dimers are in GDP-bound state, owing to GTPase activity of alpha-tubulin. This is Tubulin beta chain (benR) from Aspergillus parasiticus.